The sequence spans 427 residues: MNKSEQLFEQAQKIIPGGVNSPVRAFNGVGGTPCFIKRAQGAYIYDADDKAYIDYVGSWGPMILGHNHPAILEAVITTAKNGLSFGAPTEIEITMAEKVRELVPSMESLRMVSSGTEATMSAIRLARGYTGRDKILKFEGCYHGHADALLVKAGSGALTLGVPNSPGIPEDFAKHTLTVSYNNIDEVKEIFAKYADEIACIIVEPVAGNMNCIPPVEGFLEGLRDVCDQYSSVLIFDEVMTGFRVALGGAQAHYNIKPDLTTLGKVIGGGMPVGAFGGKQEIMDYIAPVGPVYQAGTLSGNPIAMAAGLASLTELAQGNKHQQLSSATEKLAMGLKAAAERNGVSLSVNYVGAMFGFFFTEDKNPITTYEQATQCDGEMFKRFFHLMLDEGVYLAPSSYETGFLSTSHTDDIIEKTLVAADKCFAQL.

K265 is modified (N6-(pyridoxal phosphate)lysine).

It belongs to the class-III pyridoxal-phosphate-dependent aminotransferase family. HemL subfamily. As to quaternary structure, homodimer. Pyridoxal 5'-phosphate is required as a cofactor.

It localises to the cytoplasm. It catalyses the reaction (S)-4-amino-5-oxopentanoate = 5-aminolevulinate. The protein operates within porphyrin-containing compound metabolism; protoporphyrin-IX biosynthesis; 5-aminolevulinate from L-glutamyl-tRNA(Glu): step 2/2. The chain is Glutamate-1-semialdehyde 2,1-aminomutase from Colwellia psychrerythraea (strain 34H / ATCC BAA-681) (Vibrio psychroerythus).